The primary structure comprises 395 residues: Elongation factor Tu (395 aa).

The region spanning 10-204 (KPHVNIGTIG…IVDEYIPTPE (195 aa)) is the tr-type G domain. The tract at residues 19–26 (GHVDHGKT) is G1. 19–26 (GHVDHGKT) lines the GTP pocket. Thr-26 provides a ligand contact to Mg(2+). Residues 60-64 (GITIN) form a G2 region. The tract at residues 81–84 (DAPG) is G3. Residues 81 to 85 (DAPGH) and 136 to 139 (NKAD) each bind GTP. The interval 136 to 139 (NKAD) is G4. The segment at 174–176 (SAL) is G5.

Belongs to the TRAFAC class translation factor GTPase superfamily. Classic translation factor GTPase family. EF-Tu/EF-1A subfamily. In terms of assembly, monomer.

The protein localises to the cytoplasm. The catalysed reaction is GTP + H2O = GDP + phosphate + H(+). In terms of biological role, GTP hydrolase that promotes the GTP-dependent binding of aminoacyl-tRNA to the A-site of ribosomes during protein biosynthesis. This chain is Elongation factor Tu, found in Lactococcus lactis subsp. lactis (strain IL1403) (Streptococcus lactis).